Here is a 215-residue protein sequence, read N- to C-terminus: Large ribosomal subunit protein uL3 (215 aa).

Position 156 is an N5-methylglutamine (glutamine 156).

Belongs to the universal ribosomal protein uL3 family. As to quaternary structure, part of the 50S ribosomal subunit. Forms a cluster with proteins L14 and L19. Methylated by PrmB.

Its function is as follows. One of the primary rRNA binding proteins, it binds directly near the 3'-end of the 23S rRNA, where it nucleates assembly of the 50S subunit. This Xylella fastidiosa (strain M12) protein is Large ribosomal subunit protein uL3.